Here is a 284-residue protein sequence, read N- to C-terminus: 16S rRNA (guanine(1405)-N(7))-methyltransferase (284 aa).

S-adenosyl-L-methionine is bound by residues Tyr-73, 111 to 113 (HAS), Arg-117, Ala-142, Asp-165, 191 to 192 (DL), Leu-208, and Gln-217.

It belongs to the methyltransferase superfamily. Aminoglycoside resistance family.

The enzyme catalyses guanosine(1405) in 16S rRNA + S-adenosyl-L-methionine = N(7)-methylguanosine(1405) in 16S rRNA + S-adenosyl-L-homocysteine. Its function is as follows. Specifically methylates the N(7) position of guanine 1405 in 16S rRNA. Confers resistance to various aminoglycosides, including gentamicin and kanamycin. This chain is 16S rRNA (guanine(1405)-N(7))-methyltransferase (Krm), found in Frankia casuarinae (strain DSM 45818 / CECT 9043 / HFP020203 / CcI3).